Here is a 261-residue protein sequence, read N- to C-terminus: Thiamine thiazole synthase (261 aa).

Residues alanine 33, glutamate 52–arginine 53, glycine 60, valine 124, and histidine 152–aspartate 154 each bind NAD(+). Fe cation contacts are provided by aspartate 154 and histidine 169. Methionine 219 contributes to the NAD(+) binding site. Arginine 229 provides a ligand contact to glycine.

It belongs to the THI4 family. In terms of assembly, homooctamer; tetramer of dimers. Fe(2+) serves as cofactor.

It carries out the reaction hydrogen sulfide + glycine + NAD(+) = ADP-5-ethyl-4-methylthiazole-2-carboxylate + nicotinamide + 3 H2O + H(+). It participates in cofactor biosynthesis; thiamine diphosphate biosynthesis. In terms of biological role, involved in the biosynthesis of the thiazole moiety of thiamine. Catalyzes the conversion of NAD and glycine to adenosine diphosphate 5-(2-hydroxyethyl)-4-methylthiazole-2-carboxylate (ADT), an adenylated thiazole intermediate, using free sulfide as a source of sulfur. In Pyrobaculum islandicum (strain DSM 4184 / JCM 9189 / GEO3), this protein is Thiamine thiazole synthase.